Reading from the N-terminus, the 490-residue chain is Cobyric acid synthase (490 aa).

The GATase cobBQ-type domain maps to 252–439; sequence RLKVVVPVLP…LHGLFESTAA (188 aa). The active-site Nucleophile is Cys-333. His-431 is a catalytic residue.

This sequence belongs to the CobB/CobQ family. CobQ subfamily.

It participates in cofactor biosynthesis; adenosylcobalamin biosynthesis. Its function is as follows. Catalyzes amidations at positions B, D, E, and G on adenosylcobyrinic A,C-diamide. NH(2) groups are provided by glutamine, and one molecule of ATP is hydrogenolyzed for each amidation. The sequence is that of Cobyric acid synthase from Pseudomonas paraeruginosa (strain DSM 24068 / PA7) (Pseudomonas aeruginosa (strain PA7)).